The following is a 596-amino-acid chain: MGRGARAAAAQSRWGRASRASVSPGRTIRSAPAVGEAQETEAAPEKENRVDVGAEERAAATRPRQKSWLVRHFSLLLRRDRQAQKAGQLFSGLLALNVVFLGGAFICSMIFNKVAVTLGDVWILLATLKVLSLLWLLYYVASTTRRPHAVLYQDPHAGPLWVRGSLVLFGSCTFCLNIFRVGYDVSHIRCKSQLDLVFSVIEMVFIGVQTWVLWKHCKDCVRVQTNFTRCGLMLTLATNLLLWVLAVTNDSMHREIEAELGILMEKSTGNETNTCLCLNATACEAFRRGFLMLYPFSTEYCLICCAVLFVMWKNVGRHVAPHMGAHPATAPFHLHGAIFGPLLGLLVLLAGVCVFVLFQIEASGPAIACQYFTLYYAFYVAVLPTMSLACLAGTAIHGLEERELDTVKNPTRSLDVVLLMGAALGQMGIAYFSIVAIVAKRPHELLNRLILAYSLLLILQHIAQNLFIIEGLHRRPLWETVPEGLAGKQEAEPPRRGSLLELGQGLQRASLAYIHSYSHLNWKRRALKEISLFLILCNITLWMMPAFGIHPEFENGLEKDFYGYQIWFAIVNFGLPLGVFYRMHSVGGLVEVYLGA.

Over residues 1 to 21 the composition is skewed to low complexity; sequence MGRGARAAAAQSRWGRASRAS. The disordered stretch occupies residues 1-59; it reads MGRGARAAAAQSRWGRASRASVSPGRTIRSAPAVGEAQETEAAPEKENRVDVGAEERAA. Residues 1–88 are Cytoplasmic-facing; sequence MGRGARAAAA…RDRQAQKAGQ (88 aa). A phosphoserine mark is found at S21 and S23. The span at 43-59 shows a compositional bias: basic and acidic residues; it reads APEKENRVDVGAEERAA. Residues 89–109 form a helical membrane-spanning segment; that stretch reads LFSGLLALNVVFLGGAFICSM. The Extracellular portion of the chain corresponds to 110–119; that stretch reads IFNKVAVTLG. The chain crosses the membrane as a helical span at residues 120–143; it reads DVWILLATLKVLSLLWLLYYVAST. The Cytoplasmic segment spans residues 144–159; that stretch reads TRRPHAVLYQDPHAGP. The helical transmembrane segment at 160-181 threads the bilayer; it reads LWVRGSLVLFGSCTFCLNIFRV. Residues 182–193 lie on the Extracellular side of the membrane; that stretch reads GYDVSHIRCKSQ. Residues 194 to 217 traverse the membrane as a helical segment; it reads LDLVFSVIEMVFIGVQTWVLWKHC. The Cytoplasmic segment spans residues 218 to 225; that stretch reads KDCVRVQT. Residues 226-248 traverse the membrane as a helical segment; that stretch reads NFTRCGLMLTLATNLLLWVLAVT. Topologically, residues 249 to 295 are extracellular; it reads NDSMHREIEAELGILMEKSTGNETNTCLCLNATACEAFRRGFLMLYP. The chain crosses the membrane as a helical span at residues 296 to 312; it reads FSTEYCLICCAVLFVMW. Residues 313–338 are Cytoplasmic-facing; sequence KNVGRHVAPHMGAHPATAPFHLHGAI. A helical membrane pass occupies residues 339–358; that stretch reads FGPLLGLLVLLAGVCVFVLF. The Extracellular segment spans residues 359-372; sequence QIEASGPAIACQYF. Residues 373-395 form a helical membrane-spanning segment; the sequence is TLYYAFYVAVLPTMSLACLAGTA. Residues 396–413 lie on the Cytoplasmic side of the membrane; sequence IHGLEERELDTVKNPTRS. The chain crosses the membrane as a helical span at residues 414–435; it reads LDVVLLMGAALGQMGIAYFSIV. Residues 436–446 are Extracellular-facing; that stretch reads AIVAKRPHELL. A helical membrane pass occupies residues 447–469; it reads NRLILAYSLLLILQHIAQNLFII. Over 470–529 the chain is Cytoplasmic; the sequence is EGLHRRPLWETVPEGLAGKQEAEPPRRGSLLELGQGLQRASLAYIHSYSHLNWKRRALKE. Residues 530 to 547 form a helical membrane-spanning segment; that stretch reads ISLFLILCNITLWMMPAF. Residues 548–566 lie on the Extracellular side of the membrane; it reads GIHPEFENGLEKDFYGYQI. A helical membrane pass occupies residues 567–589; it reads WFAIVNFGLPLGVFYRMHSVGGL. The Cytoplasmic segment spans residues 590–596; sequence VEVYLGA.

This sequence belongs to the otopetrin family. Homodimer.

It localises to the cell membrane. The catalysed reaction is H(+)(in) = H(+)(out). Its activity is regulated as follows. Activated by extracellular acidification. Activated by Zn(2+) under non-acidic conditions. Functionally, proton-selective channel gated by extracellular protons. In Homo sapiens (Human), this protein is Proton channel OTOP3.